The sequence spans 236 residues: Uridylate kinase (236 aa).

10–13 is a binding site for ATP; it reads KLSG. UMP is bound at residue G52. G53 and R57 together coordinate ATP. Residues D72 and 133–140 contribute to the UMP site; that span reads TGNPFFTT. Residues T160, Y166, and D169 each coordinate ATP.

Belongs to the UMP kinase family. Homohexamer.

It is found in the cytoplasm. The enzyme catalyses UMP + ATP = UDP + ADP. It participates in pyrimidine metabolism; CTP biosynthesis via de novo pathway; UDP from UMP (UMPK route): step 1/1. Inhibited by UTP. Catalyzes the reversible phosphorylation of UMP to UDP. The polypeptide is Uridylate kinase (Polaromonas sp. (strain JS666 / ATCC BAA-500)).